Here is a 142-residue protein sequence, read N- to C-terminus: Small heat shock protein IbpB (142 aa).

Residues 26–137 form the sHSP domain; sequence AGESQSFPPY…AAQRIAISER (112 aa).

Belongs to the small heat shock protein (HSP20) family. As to quaternary structure, homodimer. Forms homomultimers of about 100-150 subunits at optimal growth temperatures. Conformation changes to oligomers at high temperatures or high ionic concentrations. The decrease in size of the multimers is accompanied by an increase in chaperone activity.

Its subcellular location is the cytoplasm. In terms of biological role, associates with aggregated proteins, together with IbpA, to stabilize and protect them from irreversible denaturation and extensive proteolysis during heat shock and oxidative stress. Aggregated proteins bound to the IbpAB complex are more efficiently refolded and reactivated by the ATP-dependent chaperone systems ClpB and DnaK/DnaJ/GrpE. Its activity is ATP-independent. This chain is Small heat shock protein IbpB, found in Escherichia coli O7:K1 (strain IAI39 / ExPEC).